The sequence spans 224 residues: Large ribosomal subunit protein uL16z (224 aa).

The protein belongs to the universal ribosomal protein uL16 family. As to quaternary structure, component of the small ribosomal subunit. Mature ribosomes consist of a small (40S) and a large (60S) subunit. The 40S subunit contains about 33 different proteins and 1 molecule of RNA (18S). The 60S subunit contains about 49 different proteins and 3 molecules of RNA (25S, 5.8S and 5S).

The chain is Large ribosomal subunit protein uL16z (SC34) from Oryza sativa subsp. indica (Rice).